We begin with the raw amino-acid sequence, 448 residues long: Cyclic dof factor 3 (448 aa).

The segment at 26–108 (AVTVEDDEED…DGKTLKKPTK (83 aa)) is disordered. Acidic residues predominate over residues 29–39 (VEDDEEDDWSG). Over residues 40–54 (GDDKSPEKVTPELSD) the composition is skewed to basic and acidic residues. Over residues 55 to 69 (KNNNNCNDNSFNNSK) the composition is skewed to low complexity. Residues 80 to 99 (STDQIESSDTPEDNQQTTPD) show a composition bias toward polar residues. The segment at 110-164 (LPCPRCKSMETKFCYYNNYNINQPRHFCKACQRYWTAGGTMRNVPVGAGRRKNKS) adopts a Dof-type zinc-finger fold. Zn(2+) contacts are provided by Cys-112, Cys-115, Cys-137, and Cys-140. Disordered regions lie at residues 243–269 (NGDD…AQSG) and 332–370 (SSSP…KQKA). Polar residues-rich tracts occupy residues 246–259 (DCSS…SNNH) and 332–347 (SSSP…NSPT). Residues 351–368 (HPRDEGSSKKDNETERKQ) show a composition bias toward basic and acidic residues.

As to quaternary structure, interacts with ADO2 (via kelch repeats) and ADO3 (via kelch repeats). Expressed in the vasculature of cotyledons and hypocotyls, leaves and roots.

The protein localises to the nucleus. In terms of biological role, transcription factor that binds specifically to a 5'-AA[AG]G-3' consensus core sequence. Regulates a photoperiodic flowering response. Transcriptional repressor of 'CONSTANS' expression. The protein is Cyclic dof factor 3 (CDF3) of Arabidopsis thaliana (Mouse-ear cress).